The primary structure comprises 336 residues: Inactive serine/threonine-protein kinase PLK5 (336 aa).

In terms of domain architecture, Protein kinase; truncated spans 1–65 (MYTVLTGTPP…LDHLLQDDFF (65 aa)). Disordered regions lie at residues 109–135 (PCPF…WDGE) and 224–245 (GRTG…LPTP). Residues 255 to 336 (LLRFLASEHA…HHALRMLQSI (82 aa)) form the POLO box domain.

Belongs to the protein kinase superfamily. Ser/Thr protein kinase family. CDC5/Polo subfamily. Expressed in the brain, neurons and glial cells. Also expressed in highly differentiated cells, such as the serous acini in the parotid gland, distal and proximal tubules of the kidney, tubules of the seminal gland, Kupffer cells and some hepatocytes in the liver, and some cells in the germinal center of lymph nodes (at protein level).

It is found in the nucleus. The protein resides in the nucleolus. The protein localises to the cytoplasm. Functionally, inactive serine/threonine-protein kinase that plays a role in cell cycle progression and neuronal differentiation. In Homo sapiens (Human), this protein is Inactive serine/threonine-protein kinase PLK5 (PLK5).